The sequence spans 332 residues: Agamous-like MADS-box protein AGL66 (332 aa).

One can recognise an MADS-box domain in the interval Met1–Thr61. A coiled-coil region spans residues Thr120–Glu151.

In terms of assembly, forms a heterodimer with AGL30. As to expression, expressed in pollen.

Its subcellular location is the nucleus. Functionally, probable transcription factor that forms a heterodimer with the MADS-box protein AGL30 and is involved in the regulation of pollen maturation at the late stages of pollen development and pollen tube growth. This is Agamous-like MADS-box protein AGL66 from Arabidopsis thaliana (Mouse-ear cress).